Here is a 563-residue protein sequence, read N- to C-terminus: F-box/kelch-repeat protein At5g42350 (563 aa).

The 47-residue stretch at 129–175 folds into the F-box domain; it reads YRKHVYLPDDILEMCLMRLPLTSLLNAHLVCKKWQSMANTQRFLQMR. 3 Kelch repeats span residues 184–231, 232–282, and 355–402; these read WLFL…SIHE, EIYI…ATEV, and VLIA…IICN.

This Arabidopsis thaliana (Mouse-ear cress) protein is F-box/kelch-repeat protein At5g42350.